The chain runs to 311 residues: Malate dehydrogenase (311 aa).

Residues 7–13 (GAAGGIG) and aspartate 34 contribute to the NAD(+) site. Residues arginine 81 and arginine 87 each contribute to the substrate site. Residues asparagine 94 and 117 to 119 (ITN) contribute to the NAD(+) site. Substrate contacts are provided by asparagine 119 and arginine 153. Histidine 177 (proton acceptor) is an active-site residue. Methionine 227 serves as a coordination point for NAD(+).

The protein belongs to the LDH/MDH superfamily. MDH type 1 family. As to quaternary structure, homodimer.

It carries out the reaction (S)-malate + NAD(+) = oxaloacetate + NADH + H(+). In terms of biological role, catalyzes the reversible oxidation of malate to oxaloacetate. The chain is Malate dehydrogenase from Shewanella baltica (strain OS155 / ATCC BAA-1091).